The following is a 233-amino-acid chain: Phosphoribosylformylglycinamidine synthase subunit PurQ (233 aa).

The Glutamine amidotransferase type-1 domain maps to 3 to 233; that stretch reads SAVLVFPGIN…GLVEHLKTAA (231 aa). Cys87 functions as the Nucleophile in the catalytic mechanism. Active-site residues include His204 and Glu206.

In terms of assembly, part of the FGAM synthase complex composed of 1 PurL, 1 PurQ and 2 PurS subunits.

Its subcellular location is the cytoplasm. The catalysed reaction is N(2)-formyl-N(1)-(5-phospho-beta-D-ribosyl)glycinamide + L-glutamine + ATP + H2O = 2-formamido-N(1)-(5-O-phospho-beta-D-ribosyl)acetamidine + L-glutamate + ADP + phosphate + H(+). The enzyme catalyses L-glutamine + H2O = L-glutamate + NH4(+). It participates in purine metabolism; IMP biosynthesis via de novo pathway; 5-amino-1-(5-phospho-D-ribosyl)imidazole from N(2)-formyl-N(1)-(5-phospho-D-ribosyl)glycinamide: step 1/2. Functionally, part of the phosphoribosylformylglycinamidine synthase complex involved in the purines biosynthetic pathway. Catalyzes the ATP-dependent conversion of formylglycinamide ribonucleotide (FGAR) and glutamine to yield formylglycinamidine ribonucleotide (FGAM) and glutamate. The FGAM synthase complex is composed of three subunits. PurQ produces an ammonia molecule by converting glutamine to glutamate. PurL transfers the ammonia molecule to FGAR to form FGAM in an ATP-dependent manner. PurS interacts with PurQ and PurL and is thought to assist in the transfer of the ammonia molecule from PurQ to PurL. This chain is Phosphoribosylformylglycinamidine synthase subunit PurQ, found in Rhodopseudomonas palustris (strain HaA2).